The chain runs to 505 residues: 2,3-bisphosphoglycerate-independent phosphoglycerate mutase (505 aa).

Mn(2+) contacts are provided by aspartate 12 and serine 62. Serine 62 acts as the Phosphoserine intermediate in catalysis. Substrate-binding positions include histidine 123, 153 to 154, arginine 185, arginine 191, 257 to 260, and lysine 330; these read RD and RPDR. Positions 397, 401, 438, 439, and 456 each coordinate Mn(2+).

This sequence belongs to the BPG-independent phosphoglycerate mutase family. In terms of assembly, monomer. Mn(2+) is required as a cofactor.

The enzyme catalyses (2R)-2-phosphoglycerate = (2R)-3-phosphoglycerate. Its pathway is carbohydrate degradation; glycolysis; pyruvate from D-glyceraldehyde 3-phosphate: step 3/5. Its function is as follows. Catalyzes the interconversion of 2-phosphoglycerate and 3-phosphoglycerate. This chain is 2,3-bisphosphoglycerate-independent phosphoglycerate mutase, found in Staphylococcus haemolyticus (strain JCSC1435).